A 403-amino-acid polypeptide reads, in one-letter code: Nuclear receptor subfamily 2 group F member 5 (403 aa).

The interval 16 to 44 is disordered; the sequence is PGSQLQMCSQEPGGTPGTPSGSTPGNDAL. Positions 51-126 form a DNA-binding region, nuclear receptor; that stretch reads NVDCMVCGDK…VGMRREAVQR (76 aa). NR C4-type zinc fingers lie at residues 54–74 and 90–114; these read CMVC…CEGC and CRGN…LKKC. Residues 152 to 378 enclose the NR LBD domain; it reads YLSGFISLLL…TLLRDMLLSG (227 aa).

It belongs to the nuclear hormone receptor family. NR2 subfamily.

The protein resides in the nucleus. In terms of biological role, putative receptor that is required in photoreceptor cells precursors during eye development. The chain is Nuclear receptor subfamily 2 group F member 5 (nr2f5) from Danio rerio (Zebrafish).